The primary structure comprises 313 residues: Metaxin-3 (313 aa).

Residues 280-313 (EKMDDNLRSSPQHRPHRHEAKPSAPASDRNSTPA) form a disordered region.

It belongs to the metaxin family. As to quaternary structure, part of a large protein complex spanning both mitochondrial membranes termed the mitochondrial intermembrane space bridging (MIB) complex.

The protein resides in the mitochondrion. Its subcellular location is the mitochondrion outer membrane. Functionally, could function in transport of proteins into the mitochondrion. In Danio rerio (Zebrafish), this protein is Metaxin-3 (mtx3).